The following is an 800-amino-acid chain: Nucleolar complex protein 3 homolog (800 aa).

Composition is skewed to basic residues over residues 1–19 and 42–53; these read MGPA…RKLL and KKQRKEQRKLHK. Disordered stretches follow at residues 1 to 91 and 167 to 197; these read MGPA…TDMM and KPVL…SAPL. Residues 65 to 74 are compositionally biased toward basic and acidic residues; sequence PLERYKKRPE. Positions 449 to 490 form a coiled coil; that stretch reads SFKEKRKNLSRMQRKWKKAEEKLQKELLEAEATESKEKKIKL. Residues 780–800 are disordered; that stretch reads LQEEPEQMSLDFTSPHTQQEP. Over residues 789 to 800 the composition is skewed to polar residues; it reads LDFTSPHTQQEP.

The protein belongs to the CBF/MAK21 family.

It localises to the nucleus. The protein localises to the nucleolus. The sequence is that of Nucleolar complex protein 3 homolog (noc3l) from Danio rerio (Zebrafish).